The chain runs to 126 residues: Holo-[acyl-carrier-protein] synthase (126 aa).

Mg(2+)-binding residues include D9 and E58.

It belongs to the P-Pant transferase superfamily. AcpS family. Mg(2+) serves as cofactor.

Its subcellular location is the cytoplasm. The catalysed reaction is apo-[ACP] + CoA = holo-[ACP] + adenosine 3',5'-bisphosphate + H(+). Functionally, transfers the 4'-phosphopantetheine moiety from coenzyme A to a Ser of acyl-carrier-protein. This is Holo-[acyl-carrier-protein] synthase from Photobacterium profundum (strain SS9).